Here is a 442-residue protein sequence, read N- to C-terminus: UDP-N-acetylmuramate--L-alanine ligase (442 aa).

109–115 (GAHGKTS) provides a ligand contact to ATP.

The protein belongs to the MurCDEF family.

The protein resides in the cytoplasm. The enzyme catalyses UDP-N-acetyl-alpha-D-muramate + L-alanine + ATP = UDP-N-acetyl-alpha-D-muramoyl-L-alanine + ADP + phosphate + H(+). It functions in the pathway cell wall biogenesis; peptidoglycan biosynthesis. In terms of biological role, cell wall formation. The chain is UDP-N-acetylmuramate--L-alanine ligase from Streptococcus pyogenes serotype M2 (strain MGAS10270).